A 474-amino-acid polypeptide reads, in one-letter code: 6-phospho-beta-glucosidase AscB (474 aa).

Catalysis depends on glutamate 180, which acts as the Proton donor. The active-site Nucleophile is the glutamate 372.

This sequence belongs to the glycosyl hydrolase 1 family.

The enzyme catalyses 6-phospho-beta-D-glucosyl-(1-&gt;4)-D-glucose + H2O = D-glucose 6-phosphate + D-glucose. Its function is as follows. Can hydrolyze salicin, cellobiose, and probably arbutin. The chain is 6-phospho-beta-glucosidase AscB (ascB) from Escherichia coli (strain K12).